The sequence spans 512 residues: 2,3-bisphosphoglycerate-independent phosphoglycerate mutase (512 aa).

Residues Asp11 and Ser61 each contribute to the Mn(2+) site. Catalysis depends on Ser61, which acts as the Phosphoserine intermediate. Residues His122, 152–153, Arg184, Arg190, 259–262, and Lys332 each bind substrate; these read RD and RADR. Asp399, His403, Asp440, His441, and His459 together coordinate Mn(2+).

The protein belongs to the BPG-independent phosphoglycerate mutase family. In terms of assembly, monomer. Mn(2+) serves as cofactor.

It catalyses the reaction (2R)-2-phosphoglycerate = (2R)-3-phosphoglycerate. Its pathway is carbohydrate degradation; glycolysis; pyruvate from D-glyceraldehyde 3-phosphate: step 3/5. Catalyzes the interconversion of 2-phosphoglycerate and 3-phosphoglycerate. This Francisella tularensis subsp. novicida (strain U112) protein is 2,3-bisphosphoglycerate-independent phosphoglycerate mutase.